The primary structure comprises 331 residues: Ferredoxin--NADP reductase (331 aa).

The FAD site is built by Glu34, Gln42, Tyr47, Val87, Phe120, Asp285, and Thr325.

It belongs to the ferredoxin--NADP reductase type 2 family. Homodimer. It depends on FAD as a cofactor.

It carries out the reaction 2 reduced [2Fe-2S]-[ferredoxin] + NADP(+) + H(+) = 2 oxidized [2Fe-2S]-[ferredoxin] + NADPH. The polypeptide is Ferredoxin--NADP reductase (Levilactobacillus brevis (strain ATCC 367 / BCRC 12310 / CIP 105137 / JCM 1170 / LMG 11437 / NCIMB 947 / NCTC 947) (Lactobacillus brevis)).